We begin with the raw amino-acid sequence, 228 residues long: Calcyclin-binding protein (228 aa).

An N-acetylmethionine modification is found at methionine 1. Alanine 2 is subject to N-acetylalanine. The tract at residues 2–80 (ASEELQKDLE…YTVKISNYGW (79 aa)) is interaction with SIAH1. Position 3 is a phosphoserine (serine 3). Residues lysine 8 and lysine 19 each carry the N6-acetyllysine modification. Phosphoserine is present on serine 34. The CS domain maps to 73–167 (VKISNYGWDQ…VENTRWDYLT (95 aa)). Residues 73–228 (VKISNYGWDQ…EKQAKGDTEF (156 aa)) form an interaction with SKP1 region. An N6-acetyllysine mark is found at lysine 85 and lysine 118. An interaction with S100A6 region spans residues 154 to 228 (CRKKVENTRW…EKQAKGDTEF (75 aa)). One can recognise an SGS domain in the interval 168-228 (QVEKECKEKE…EKQAKGDTEF (61 aa)).

Homodimer. Interacts with proteins of the S100 family S100A1, S100A6, S100B, S100P and S100A12 in a calcium-dependent manner. Component of some large E3 complex at least composed of UBE2D1, SIAH1, CACYBP/SIP, SKP1, APC and TBL1X. Interacts directly with SIAH1, SIAH2 and SKP1. In terms of processing, phosphorylated on serine residues. Phosphorylated upon induction by RA or at high calcium concentrations.

The protein localises to the nucleus. It localises to the cytoplasm. Its function is as follows. May be involved in calcium-dependent ubiquitination and subsequent proteasomal degradation of target proteins. Probably serves as a molecular bridge in ubiquitin E3 complexes. Participates in the ubiquitin-mediated degradation of beta-catenin (CTNNB1). The sequence is that of Calcyclin-binding protein (CACYBP) from Homo sapiens (Human).